We begin with the raw amino-acid sequence, 635 residues long: 1-deoxy-D-xylulose-5-phosphate synthase (635 aa).

Residues His72 and 113–115 contribute to the thiamine diphosphate site; that span reads GHA. Asp144 lines the Mg(2+) pocket. Thiamine diphosphate-binding positions include 145-146, Asn174, Tyr286, and Glu369; that span reads GA. Asn174 provides a ligand contact to Mg(2+).

The protein belongs to the transketolase family. DXPS subfamily. In terms of assembly, homodimer. Requires Mg(2+) as cofactor. The cofactor is thiamine diphosphate.

It catalyses the reaction D-glyceraldehyde 3-phosphate + pyruvate + H(+) = 1-deoxy-D-xylulose 5-phosphate + CO2. It functions in the pathway metabolic intermediate biosynthesis; 1-deoxy-D-xylulose 5-phosphate biosynthesis; 1-deoxy-D-xylulose 5-phosphate from D-glyceraldehyde 3-phosphate and pyruvate: step 1/1. Functionally, catalyzes the acyloin condensation reaction between C atoms 2 and 3 of pyruvate and glyceraldehyde 3-phosphate to yield 1-deoxy-D-xylulose-5-phosphate (DXP). This chain is 1-deoxy-D-xylulose-5-phosphate synthase, found in Acaryochloris marina (strain MBIC 11017).